The primary structure comprises 362 residues: Oxysterol-binding protein 5 (362 aa).

This sequence belongs to the OSBP family.

This Dictyostelium discoideum (Social amoeba) protein is Oxysterol-binding protein 5 (osbE).